The following is a 249-amino-acid chain: Proteasome subunit alpha (249 aa).

The protein belongs to the peptidase T1A family. The 20S proteasome core is composed of 14 alpha and 14 beta subunits that assemble into four stacked heptameric rings, resulting in a barrel-shaped structure. The two inner rings, each composed of seven catalytic beta subunits, are sandwiched by two outer rings, each composed of seven alpha subunits. The catalytic chamber with the active sites is on the inside of the barrel. Has a gated structure, the ends of the cylinder being occluded by the N-termini of the alpha-subunits. Is capped at one or both ends by the proteasome regulatory ATPase, PAN.

The protein resides in the cytoplasm. Its activity is regulated as follows. The formation of the proteasomal ATPase PAN-20S proteasome complex, via the docking of the C-termini of PAN into the intersubunit pockets in the alpha-rings, triggers opening of the gate for substrate entry. Interconversion between the open-gate and close-gate conformations leads to a dynamic regulation of the 20S proteasome proteolysis activity. Component of the proteasome core, a large protease complex with broad specificity involved in protein degradation. This Methanosarcina mazei (strain ATCC BAA-159 / DSM 3647 / Goe1 / Go1 / JCM 11833 / OCM 88) (Methanosarcina frisia) protein is Proteasome subunit alpha.